Reading from the N-terminus, the 504-residue chain is Aromatic and large neutral amino acid transporter 5-3 (504 aa).

The tract at residues 1–24 (MESTEATMVERKAESPSSGDRARS) is disordered. Residues 8–24 (MVERKAESPSSGDRARS) show a composition bias toward basic and acidic residues. The next 6 membrane-spanning stretches (helical) occupy residues 76–96 (YVVL…FMNW), 138–158 (HLFT…GIML), 165–185 (FGAL…GFSS), 206–226 (FFPC…IIAV), 233–253 (ISFI…GATF), and 256–276 (VMLG…LFII). Asn310 is a glycosylation site (N-linked (GlcNAc...) asparagine). 6 helical membrane passes run 324-344 (LSFL…LFFA), 356-376 (EANQ…GGIA), 381-401 (IVPV…LMLI), 406-426 (CFAA…SFLV), 436-456 (IFYP…GGII), and 475-495 (MTVL…FMYV).

It belongs to the SLC43A transporter (TC 2.A.1.44) family.

It is found in the cell membrane. It carries out the reaction L-tyrosine(in) = L-tyrosine(out). With respect to regulation, L-tyrosine uptake is stimulated in trans by aromatic and large neutral amino acids, but not smaller or charged amino acids. L-tyrosine transporter that is essential for parasite survival and virulence. May also act as an aromatic and large neutral amino acid transporter. Does not cotransport other charged ions. Involved in amino acid homeostasis by facilitating the net uptake of L-tyrosine and maintaining intracellular pools of aromatic and large neutral amino acids through exchange. The protein is Aromatic and large neutral amino acid transporter 5-3 of Toxoplasma gondii.